Reading from the N-terminus, the 259-residue chain is Putative aldolase class 2 protein PA3430 (259 aa).

3 residues coordinate Zn(2+): histidine 113, histidine 115, and histidine 176.

Belongs to the aldolase class II family. It depends on Zn(2+) as a cofactor.

The polypeptide is Putative aldolase class 2 protein PA3430 (Pseudomonas aeruginosa (strain ATCC 15692 / DSM 22644 / CIP 104116 / JCM 14847 / LMG 12228 / 1C / PRS 101 / PAO1)).